Reading from the N-terminus, the 411-residue chain is Multidrug resistance protein MdtG (411 aa).

11 helical membrane-spanning segments follow: residues 17-37 (LFVA…VMPF), 59-79 (LVFS…GGLA), 92-112 (ALGM…WQFL), 116-136 (AVLG…ATQV), 147-167 (WLST…GLLA), 174-194 (PVFF…LFAV), 222-242 (VLTL…IAPI), 257-277 (LAFV…ISAP), 291-311 (ILVA…MVQN), 320-340 (FLLG…LIYN), and 379-399 (AVFV…WITL).

It belongs to the major facilitator superfamily. DHA1 family. MdtG (TC 2.A.1.2.20) subfamily.

It is found in the cell inner membrane. This chain is Multidrug resistance protein MdtG, found in Erwinia billingiae (strain Eb661).